The chain runs to 502 residues: UPF0371 protein CLK_3516 (502 aa).

This sequence belongs to the UPF0371 family.

The chain is UPF0371 protein CLK_3516 from Clostridium botulinum (strain Loch Maree / Type A3).